The chain runs to 74 residues: Protein DELETION OF SUV3 SUPPRESSOR 1(I) (74 aa).

Residues 35-74 form a disordered region; sequence EKEEVKEVSQQWEDDWDDDDVNDDFSRQLRKELENGTDKK. The span at 46–57 shows a compositional bias: acidic residues; sequence WEDDWDDDDVND. Residues 58 to 74 show a composition bias toward basic and acidic residues; the sequence is DFSRQLRKELENGTDKK.

This sequence belongs to the DSS1/SEM1 family. As to quaternary structure, part of the 26S proteasome. Interacts with BRCA2A and BRCA2B. Interacts with UCH1 and UCH2. Can form a tripartite complex with both RAD51 and BRCA2B or both DMC1 and BRCA2B.

Its function is as follows. Subunit of the 26S proteasome which plays a role in ubiquitin-dependent proteolysis. In Arabidopsis thaliana (Mouse-ear cress), this protein is Protein DELETION OF SUV3 SUPPRESSOR 1(I).